A 493-amino-acid polypeptide reads, in one-letter code: uncharacterized protein (493 aa).

The helical transmembrane segment at 10–30 (LVPSTRFALSLVMFFGCLVTY) threads the bilayer. N-linked (GlcNAc...) asparagine glycosylation is found at asparagine 35, asparagine 47, and asparagine 69. The next 6 membrane-spanning stretches (helical) occupy residues 85 to 105 (MVLS…GHLA), 112 to 132 (RVVF…PVAA), 144 to 164 (AAIG…WSVW), 175 to 195 (GVTY…SGFL), 205 to 225 (PSIF…WWYV), and 272 to 292 (AVWA…TMLV). The N-linked (GlcNAc...) asparagine glycan is linked to asparagine 305. 4 helical membrane passes run 311–331 (AVAS…GVLA), 348–368 (AAML…GYCG), 375–395 (VIIF…GFVV), and 406–426 (GTVM…SPAV). Asparagine 433 carries N-linked (GlcNAc...) asparagine glycosylation. The chain crosses the membrane as a helical span at residues 441-461 (MVLWLTAGILTIGALLFSIFA).

The protein belongs to the major facilitator superfamily. Sodium/anion cotransporter family.

It is found in the membrane. This is an uncharacterized protein from Caenorhabditis elegans.